The sequence spans 114 residues: Phosphoribosyl-ATP pyrophosphatase (114 aa).

This sequence belongs to the PRA-PH family.

It localises to the cytoplasm. It catalyses the reaction 1-(5-phospho-beta-D-ribosyl)-ATP + H2O = 1-(5-phospho-beta-D-ribosyl)-5'-AMP + diphosphate + H(+). Its pathway is amino-acid biosynthesis; L-histidine biosynthesis; L-histidine from 5-phospho-alpha-D-ribose 1-diphosphate: step 2/9. The protein is Phosphoribosyl-ATP pyrophosphatase of Leuconostoc mesenteroides subsp. mesenteroides (strain ATCC 8293 / DSM 20343 / BCRC 11652 / CCM 1803 / JCM 6124 / NCDO 523 / NBRC 100496 / NCIMB 8023 / NCTC 12954 / NRRL B-1118 / 37Y).